Reading from the N-terminus, the 229-residue chain is DNA repair protein RecO (229 aa).

Belongs to the RecO family.

Involved in DNA repair and RecF pathway recombination. The polypeptide is DNA repair protein RecO (Legionella pneumophila subsp. pneumophila (strain Philadelphia 1 / ATCC 33152 / DSM 7513)).